The primary structure comprises 210 residues: Orotate phosphoribosyltransferase (210 aa).

Residues R96, K100, H102, and 122–130 (DDLISTGGS) contribute to the 5-phospho-alpha-D-ribose 1-diphosphate site. S126 is a binding site for orotate.

It belongs to the purine/pyrimidine phosphoribosyltransferase family. PyrE subfamily. In terms of assembly, homodimer. It depends on Mg(2+) as a cofactor.

It carries out the reaction orotidine 5'-phosphate + diphosphate = orotate + 5-phospho-alpha-D-ribose 1-diphosphate. Its pathway is pyrimidine metabolism; UMP biosynthesis via de novo pathway; UMP from orotate: step 1/2. Its function is as follows. Catalyzes the transfer of a ribosyl phosphate group from 5-phosphoribose 1-diphosphate to orotate, leading to the formation of orotidine monophosphate (OMP). The protein is Orotate phosphoribosyltransferase of Levilactobacillus brevis (strain ATCC 367 / BCRC 12310 / CIP 105137 / JCM 1170 / LMG 11437 / NCIMB 947 / NCTC 947) (Lactobacillus brevis).